The following is a 344-amino-acid chain: 3,4-dihydroxy-2-butanone 4-phosphate synthase (344 aa).

The segment at 1–202 is DHBP synthase; it reads MILRRVTEAL…VSDLISYRLE (202 aa). Residues 27–28, Asp32, 139–143, and Glu163 each bind D-ribulose 5-phosphate; these read RE and RTGHT. A Mg(2+)-binding site is contributed by Glu28. His142 is a binding site for Mg(2+). The segment at 203-344 is GTP cyclohydrolase II-like; sequence NESLLKMFCQ…GLKLVETISL (142 aa).

This sequence in the N-terminal section; belongs to the DHBP synthase family. In the C-terminal section; belongs to the GTP cyclohydrolase II family. Mg(2+) serves as cofactor. The cofactor is Mn(2+).

The catalysed reaction is D-ribulose 5-phosphate = (2S)-2-hydroxy-3-oxobutyl phosphate + formate + H(+). The protein operates within cofactor biosynthesis; riboflavin biosynthesis; 2-hydroxy-3-oxobutyl phosphate from D-ribulose 5-phosphate: step 1/1. Functionally, catalyzes the conversion of D-ribulose 5-phosphate to formate and 3,4-dihydroxy-2-butanone 4-phosphate. In Helicobacter pylori (strain J99 / ATCC 700824) (Campylobacter pylori J99), this protein is 3,4-dihydroxy-2-butanone 4-phosphate synthase (ribB).